The primary structure comprises 422 residues: Serine--tRNA ligase (422 aa).

231-233 contacts L-serine; sequence TSE. 262-264 is an ATP binding site; that stretch reads RQE. Position 285 (glutamate 285) interacts with L-serine. 349-352 contributes to the ATP binding site; sequence EISS. Position 384 (serine 384) interacts with L-serine.

Belongs to the class-II aminoacyl-tRNA synthetase family. Type-1 seryl-tRNA synthetase subfamily. As to quaternary structure, homodimer. The tRNA molecule binds across the dimer.

It is found in the cytoplasm. It catalyses the reaction tRNA(Ser) + L-serine + ATP = L-seryl-tRNA(Ser) + AMP + diphosphate + H(+). The catalysed reaction is tRNA(Sec) + L-serine + ATP = L-seryl-tRNA(Sec) + AMP + diphosphate + H(+). Its pathway is aminoacyl-tRNA biosynthesis; selenocysteinyl-tRNA(Sec) biosynthesis; L-seryl-tRNA(Sec) from L-serine and tRNA(Sec): step 1/1. Its function is as follows. Catalyzes the attachment of serine to tRNA(Ser). Is also able to aminoacylate tRNA(Sec) with serine, to form the misacylated tRNA L-seryl-tRNA(Sec), which will be further converted into selenocysteinyl-tRNA(Sec). This chain is Serine--tRNA ligase, found in Mycoplasma mycoides subsp. mycoides SC (strain CCUG 32753 / NCTC 10114 / PG1).